Consider the following 450-residue polypeptide: Phosphoglucosamine mutase (450 aa).

S102 acts as the Phosphoserine intermediate in catalysis. The Mg(2+) site is built by S102, D243, D245, and D247. Residue S102 is modified to Phosphoserine.

The protein belongs to the phosphohexose mutase family. The cofactor is Mg(2+). Activated by phosphorylation.

It catalyses the reaction alpha-D-glucosamine 1-phosphate = D-glucosamine 6-phosphate. Its function is as follows. Catalyzes the conversion of glucosamine-6-phosphate to glucosamine-1-phosphate. This is Phosphoglucosamine mutase from Rhizobium johnstonii (strain DSM 114642 / LMG 32736 / 3841) (Rhizobium leguminosarum bv. viciae).